A 117-amino-acid chain; its full sequence is Fluoride-specific ion channel FluC 2 (117 aa).

2 helical membrane-spanning segments follow: residues 1–21 and 46–66; these read MISI…RSAI and FLIG…AFFV. Residues Gly71 and Thr74 each coordinate Na(+). Residues 95–115 form a helical membrane-spanning segment; sequence LFLNYSLLQFIIGFIACYIGY.

It belongs to the fluoride channel Fluc/FEX (TC 1.A.43) family.

It localises to the cell membrane. It carries out the reaction fluoride(in) = fluoride(out). Na(+) is not transported, but it plays an essential structural role and its presence is essential for fluoride channel function. Functionally, fluoride-specific ion channel. Important for reducing fluoride concentration in the cell, thus reducing its toxicity. The protein is Fluoride-specific ion channel FluC 2 of Staphylococcus aureus (strain Mu50 / ATCC 700699).